A 319-amino-acid chain; its full sequence is Vomeronasal type-1 receptor 96 (319 aa).

The Extracellular segment spans residues 1–19 (MNKVNILPSDTNIKITLFS). The helical transmembrane segment at 20 to 40 (EVSVGISANSVLFFAHLCMFF) threads the bilayer. The Cytoplasmic portion of the chain corresponds to 41-49 (EENRSKPID). The chain crosses the membrane as a helical span at residues 50-70 (LCIAFLSLTQLMLLVTMGLIA). Residues 71-93 (ADMFMSQGIWDSTTCRSIIYFHR) lie on the Extracellular side of the membrane. Cysteine 85 and cysteine 172 are disulfide-bonded. A helical transmembrane segment spans residues 94–114 (LLRGFNLCAACLLHILWTFTL). Topologically, residues 115–134 (SPRSSCLTKFKHKSPHHISC) are cytoplasmic. The helical transmembrane segment at 135–155 (AFFSLCVLYMLFSSHLFVLII) threads the bilayer. Residues 156–193 (ATSNLTSDHFMYVTQSCSILPMSYSRTTMFSLVMVTRE) are Extracellular-facing. Residue asparagine 159 is glycosylated (N-linked (GlcNAc...) asparagine). A helical membrane pass occupies residues 194–214 (AFLISLMALFSGYMVTLLWRH). The Cytoplasmic segment spans residues 215-238 (KKQVQHLHSTSLSSKSSPQQRATR). The chain crosses the membrane as a helical span at residues 239–259 (TILLLMSFFVVLYILDIVIFQ). Residues 260-269 (SRTKFKDGSM) lie on the Extracellular side of the membrane. The chain crosses the membrane as a helical span at residues 270 to 290 (FYSLHIIVSHSYATISPFVFI). Residues 291–319 (FSDKRIIKFLGSMSGRIINICLFSDGYGP) lie on the Cytoplasmic side of the membrane.

Belongs to the G-protein coupled receptor 1 family.

The protein localises to the cell membrane. Functionally, putative pheromone receptor implicated in the regulation of social as well as reproductive behavior. This Rattus norvegicus (Rat) protein is Vomeronasal type-1 receptor 96 (Vom1r96).